The primary structure comprises 174 residues: Small t antigen (174 aa).

At Met-1 the chain carries N-acetylmethionine; by host. The J domain occupies 12-75 (QLMDLLGLER…VKYAHQPDFG (64 aa)). The C4-type; atypical zinc-finger motif lies at 103 to 116 (CAKKMSANCICLLC). The H1C3-type; atypical zinc-finger motif lies at 122–143 (HENRKLYRKDPLVWVDCYCFDC).

As to quaternary structure, interacts with host PPP2R1A; the interaction inhibits PP2A activity.

The protein localises to the host cytoplasm. The protein resides in the host nucleus. In terms of biological role, promotes efficient viral genome replication by accelerating both G1 and S phase progression of the cell cycle. Inhibits host PP2A by binding to the A subunit, thereby displacing lower affinity regulatory B subunit. Inactivation of PP2A in turn results in the transactivation of cyclin A and cyclin D1 promoters. Late during the infection cycle, ST may induce dephosphorylation of host eIF4E-binding protein EIF4EBP1 leading to the inhibition of cap-dependent translation. May establish and maintain high levels of viral genomes during persistent infection in cell culture. This is Small t antigen from Simian virus 40 (SV40).